A 201-amino-acid polypeptide reads, in one-letter code: Small ribosomal subunit protein uS4c (201 aa).

Residues 15–43 form a disordered region; that stretch reads LGALPGLTSKRPTPGSDLRNQSRSGKRSQ. The region spanning 89 to 149 is the S4 RNA-binding domain; it reads MRLDNILFRL…DEQKSRALIQ (61 aa).

Belongs to the universal ribosomal protein uS4 family. In terms of assembly, part of the 30S ribosomal subunit. Contacts protein S5. The interaction surface between S4 and S5 is involved in control of translational fidelity.

It localises to the plastid. It is found in the chloroplast. Functionally, one of the primary rRNA binding proteins, it binds directly to 16S rRNA where it nucleates assembly of the body of the 30S subunit. Its function is as follows. With S5 and S12 plays an important role in translational accuracy. The polypeptide is Small ribosomal subunit protein uS4c (rps4) (Nandina domestica (Heavenly bamboo)).